A 377-amino-acid chain; its full sequence is RIB43A-like with coiled-coils protein 2 (377 aa).

Residues 217-246 (NKNQVVELTERKRQEKQQEQEDNMTEITNL) adopt a coiled-coil conformation. The tract at residues 354 to 377 (KQMNTASSSQPTEDYFSQFNTRSR) is disordered.

Belongs to the RIB43A family. As to quaternary structure, microtubule inner protein component of sperm flagellar doublet microtubules.

Its subcellular location is the cytoplasm. It localises to the cytoskeleton. It is found in the cilium axoneme. The protein resides in the flagellum axoneme. Functionally, microtubule inner protein (MIP) part of the dynein-decorated doublet microtubules (DMTs) in cilia axoneme, which is required for motile cilia beating. The sequence is that of RIB43A-like with coiled-coils protein 2 from Mus musculus (Mouse).